The following is a 197-amino-acid chain: CASP-like protein 1B2 (197 aa).

Alanine 2 is subject to N-acetylalanine. Topologically, residues 2–17 (AREKIVVAGGSTKSWK) are cytoplasmic. The helical transmembrane segment at 18-38 (LLLGLRVFAFMATLAAAIVMS) threads the bilayer. Over 39 to 69 (LNKETKTLVVATIGTLPIKATLTAKFQDTPA) the chain is Extracellular. The helical transmembrane segment at 70–90 (FVFFVIANVMVSFHNLLMIVL) threads the bilayer. The Cytoplasmic portion of the chain corresponds to 91–106 (QIFSRKLEYKGVRLLS). A helical transmembrane segment spans residues 107–127 (IAILDMLNATLVSAAANAAVF). Residues 128–156 (VAELGKNGNKHAKWNKVCDRFATYCDHGA) lie on the Extracellular side of the membrane. A helical membrane pass occupies residues 157-177 (GALIAAFAGVILMLLVSSVSI). The Cytoplasmic segment spans residues 178-197 (SRLLINSKHLSTTATTTAVV).

The protein belongs to the Casparian strip membrane proteins (CASP) family. Homodimer and heterodimers.

It is found in the cell membrane. The protein is CASP-like protein 1B2 of Arabidopsis lyrata subsp. lyrata (Lyre-leaved rock-cress).